The primary structure comprises 562 residues: Arginine--tRNA ligase (562 aa).

Positions 129-139 (ANPTGPLHVGH) match the 'HIGH' region motif.

The protein belongs to the class-I aminoacyl-tRNA synthetase family. Monomer.

It is found in the cytoplasm. It catalyses the reaction tRNA(Arg) + L-arginine + ATP = L-arginyl-tRNA(Arg) + AMP + diphosphate. The chain is Arginine--tRNA ligase from Xylella fastidiosa (strain M23).